We begin with the raw amino-acid sequence, 238 residues long: Cysteine-rich venom protein pseudechetoxin (238 aa).

Residues 1–19 (MIAFIVLLSLAAVLQQSSG) form the signal peptide. Positions 20 to 27 (TADFASES) are excised as a propeptide. An SCP domain is found at 38-164 (VDKHNALRRS…SSKYLYVCQY (127 aa)). Residues Thr51 and Ser106 each contribute to the Zn(2+) site. Intrachain disulfides connect Cys75–Cys153, Cys92–Cys165, Cys148–Cys162, Cys184–Cys191, Cys187–Cys196, Cys200–Cys233, Cys209–Cys227, and Cys218–Cys231. Residues 200–233 (CKRNNDFSNCKSLAKKSKCQTEWIKKKCPASCFC) form the ShKT domain.

As to expression, expressed by the venom gland.

The protein resides in the secreted. Blocks olfactory (CNGA2) and retinal (CNGA1) cyclic nucleotide-gated (CNG) ion channel currents. Does not inhibit retinal (CNGA3) currents. It forms high-affinity contacts with the pore turret region and most likely inhibits CNG channel current by blocking the external entrance to the transmembrane pore. Is really more potent that Pseudecin. Does not affect neither depolarization- nor caffeine-induced contraction arterial smooth muscle. The polypeptide is Cysteine-rich venom protein pseudechetoxin (Pseudechis australis (Mulga snake)).